The following is a 198-amino-acid chain: 3-isopropylmalate dehydratase small subunit (198 aa).

It belongs to the LeuD family. LeuD type 1 subfamily. In terms of assembly, heterodimer of LeuC and LeuD.

The enzyme catalyses (2R,3S)-3-isopropylmalate = (2S)-2-isopropylmalate. It functions in the pathway amino-acid biosynthesis; L-leucine biosynthesis; L-leucine from 3-methyl-2-oxobutanoate: step 2/4. Its function is as follows. Catalyzes the isomerization between 2-isopropylmalate and 3-isopropylmalate, via the formation of 2-isopropylmaleate. The sequence is that of 3-isopropylmalate dehydratase small subunit from Corynebacterium jeikeium (strain K411).